The following is a 1915-amino-acid chain: Cysteine repeat modular protein 2 (1915 aa).

The first 23 residues, 1 to 23 (MKFKKELINILALIFVLKKNIFA), serve as a signal peptide directing secretion. FU repeat units lie at residues 53–98 (LGLC…QTYV), 104–151 (SCIC…GYTQ), 161–208 (QLLC…LQYK), 210–263 (NGIC…GYVV), and 267–315 (TQRC…GNYQ). Asparagine 138 is a glycosylation site (N-linked (GlcNAc...) asparagine). Asparagine 274, asparagine 279, and asparagine 316 each carry an N-linked (GlcNAc...) asparagine glycan. FU repeat units follow at residues 317–362 (SSLC…GFYT), 373–422 (QPIC…QTYY), 427–492 (TRSC…GFYQ), 496–546 (NNSC…SQNN), and 554–602 (TQAC…GTYM). An N-linked (GlcNAc...) asparagine glycan is attached at asparagine 409. 4 N-linked (GlcNAc...) asparagine glycosylation sites follow: asparagine 496, asparagine 572, asparagine 603, and asparagine 621. FU repeat units lie at residues 606 to 639 (TNQC…LQQN), 640 to 686 (YNVC…GFYV), and 690 to 739 (QQAC…NECL). N-linked (GlcNAc...) asparagine glycosylation occurs at asparagine 742. 2 FU repeats span residues 760–814 (DGQC…GFYY) and 818–865 (NKQC…GYYQ). 5 N-linked (GlcNAc...) asparagine glycosylation sites follow: asparagine 909, asparagine 930, asparagine 1051, asparagine 1085, and asparagine 1193. In terms of domain architecture, EGF-like spans 1184-1224 (VQIPCDSNINCSGNGKCLWSQDNYNEILCICNINYAGRYCE). Disulfide bonds link cysteine 1188-cysteine 1200, cysteine 1194-cysteine 1212, and cysteine 1214-cysteine 1223. N-linked (GlcNAc...) asparagine glycans are attached at residues asparagine 1250, asparagine 1297, asparagine 1519, asparagine 1546, asparagine 1554, asparagine 1580, and asparagine 1596. The next 5 membrane-spanning stretches (helical) occupy residues 1599–1619 (LLYA…ISII), 1662–1682 (YAQL…VYSL), 1704–1724 (STSV…VNLF), 1763–1783 (GLVF…ILSF), and 1796–1816 (FASF…FCFI). Asparagine 1867 is a glycosylation site (N-linked (GlcNAc...) asparagine).

The protein resides in the membrane. Functionally, required for mucocyst secretion. The protein is Cysteine repeat modular protein 2 of Tetrahymena thermophila (strain SB210).